Reading from the N-terminus, the 152-residue chain is uncharacterized protein (152 aa).

The signal sequence occupies residues methionine 1–alanine 23.

This sequence belongs to the asfivirus EP152R family.

It localises to the virion. This is an uncharacterized protein from Ornithodoros (relapsing fever ticks).